The sequence spans 1859 residues: U3 small nucleolar RNA-associated protein 10 (1859 aa).

Residues 258-278 traverse the membrane as a helical segment; the sequence is LGAYSVLAVLSAVAPLSIELL. Residues 578 to 616 form an HEAT 1 repeat; it reads VLPLLLIAFNDPSSHIRAAFAQLVQLVSEITKAIHENKK. A helical transmembrane segment spans residues 1392–1412; that stretch reads IVIASISAIVSIVNVLGIKTL. The HEAT 2 repeat unit spans residues 1819 to 1857; sequence LVPHIAELLEDDDEAVEIEVREGLVRVIEKVLGEPLDRY.

Belongs to the HEATR1/UTP10 family. As to quaternary structure, component of the ribosomal small subunit (SSU) processome.

The protein resides in the nucleus. Its subcellular location is the nucleolus. It is found in the membrane. Functionally, involved in nucleolar processing of pre-18S ribosomal RNA. Involved in ribosome biosynthesis. This Lodderomyces elongisporus (strain ATCC 11503 / CBS 2605 / JCM 1781 / NBRC 1676 / NRRL YB-4239) (Yeast) protein is U3 small nucleolar RNA-associated protein 10.